The following is a 554-amino-acid chain: Glutamine--tRNA ligase (554 aa).

The 'HIGH' region signature appears at 34-44 (PEPNGYLHIGH). Residues 35–37 (EPN) and 41–47 (HIGHAKS) contribute to the ATP site. D67 and Y212 together coordinate L-glutamine. ATP contacts are provided by residues T231, 261 to 262 (RL), and 269 to 271 (MSK). A 'KMSKS' region motif is present at residues 268–272 (VMSKR). The interaction with tRNA stretch occupies residues 317–324 (TKQDNTIE).

The protein belongs to the class-I aminoacyl-tRNA synthetase family. Monomer.

It is found in the cytoplasm. The enzyme catalyses tRNA(Gln) + L-glutamine + ATP = L-glutaminyl-tRNA(Gln) + AMP + diphosphate. The protein is Glutamine--tRNA ligase of Escherichia coli O7:K1 (strain IAI39 / ExPEC).